Reading from the N-terminus, the 263-residue chain is Renal glandular kallikrein (263 aa).

The first 18 residues, 1–18 (MWFLILFLALFLGGIDAA), serve as a signal peptide directing secretion. Residues 19 to 24 (PPVQSR) constitute a propeptide, activation peptide. The 236-residue stretch at 25-260 (IIGGFNCEKN…YRSWIKDVMA (236 aa)) folds into the Peptidase S1 domain. Intrachain disulfides connect Cys31-Cys175, Cys50-Cys66, Cys153-Cys221, Cys186-Cys200, and Cys211-Cys236. His65 acts as the Charge relay system in catalysis. Residue Asn102 is glycosylated (N-linked (GlcNAc...) asparagine). Residue Asp121 is the Charge relay system of the active site. The Charge relay system role is filled by Ser215.

The protein belongs to the peptidase S1 family. Kallikrein subfamily.

It catalyses the reaction Preferential cleavage of Arg-|-Xaa bonds in small molecule substrates. Highly selective action to release kallidin (lysyl-bradykinin) from kininogen involves hydrolysis of Met-|-Xaa or Leu-|-Xaa.. Glandular kallikreins cleave Met-Lys and Arg-Ser bonds in kininogen to release Lys-bradykinin. In Mastomys natalensis (African soft-furred rat), this protein is Renal glandular kallikrein.